The primary structure comprises 260 residues: Ribosomal protein L11 methyltransferase (260 aa).

S-adenosyl-L-methionine contacts are provided by T119, G140, D162, and N203.

It belongs to the methyltransferase superfamily. PrmA family.

It localises to the cytoplasm. It carries out the reaction L-lysyl-[protein] + 3 S-adenosyl-L-methionine = N(6),N(6),N(6)-trimethyl-L-lysyl-[protein] + 3 S-adenosyl-L-homocysteine + 3 H(+). Methylates ribosomal protein L11. The protein is Ribosomal protein L11 methyltransferase of Thermosipho africanus (strain TCF52B).